A 524-amino-acid chain; its full sequence is Caffeate CoA-transferase (524 aa).

The active-site 5-glutamyl coenzyme A thioester intermediate is the Glu323.

This sequence belongs to the 3-oxoacid CoA-transferase family. In terms of assembly, homodimer.

It catalyses the reaction hydrocaffeoyl-CoA + (E)-caffeate = 3-(3,4-dihydroxyphenyl)propanoate + (E)-caffeoyl-CoA. In terms of biological role, involved in caffeate respiration, which consists in the reduction of the C-C double bond of caffeate. CarA catalyzes an energy-saving CoA loop for caffeate activation in the steady state of caffeate respiration. It catalyzes the formation of caffeyl-CoA from caffeate with hydrocaffeyl-CoA as the CoA donor via a ping-pong mechanism. In addition to caffeate, the enzyme can utilize 4-coumarate or ferulate as CoA acceptor. Neither acetyl-CoA nor butyryl-CoA served as the CoA donor. This Acetobacterium woodii protein is Caffeate CoA-transferase.